Here is a 305-residue protein sequence, read N- to C-terminus: uncharacterized protein (305 aa).

Belongs to the ADP-ribosylglycohydrolase family.

This is an uncharacterized protein from Archaeoglobus fulgidus (strain ATCC 49558 / DSM 4304 / JCM 9628 / NBRC 100126 / VC-16).